The following is a 385-amino-acid chain: Acetoin utilization protein AcuC (385 aa).

The protein belongs to the histone deacetylase family.

It participates in ketone degradation; acetoin degradation. Role in growth on acetoin or butanediol. Involved in the breakdown of these compounds used as a carbon source. The protein is Acetoin utilization protein AcuC (acuC) of Staphylococcus xylosus.